We begin with the raw amino-acid sequence, 276 residues long: NH(3)-dependent NAD(+) synthetase (276 aa).

46–53 (GISGGQDS) contributes to the ATP binding site. Asp-52 lines the Mg(2+) pocket. Arg-140 is a binding site for deamido-NAD(+). Thr-160 is an ATP binding site. Glu-165 contacts Mg(2+). Deamido-NAD(+) is bound by residues Lys-173 and Asp-180. ATP contacts are provided by Lys-189 and Thr-211. 260 to 261 (HK) contributes to the deamido-NAD(+) binding site.

Belongs to the NAD synthetase family. In terms of assembly, homodimer.

It carries out the reaction deamido-NAD(+) + NH4(+) + ATP = AMP + diphosphate + NAD(+) + H(+). The protein operates within cofactor biosynthesis; NAD(+) biosynthesis; NAD(+) from deamido-NAD(+) (ammonia route): step 1/1. Its function is as follows. Catalyzes the ATP-dependent amidation of deamido-NAD to form NAD. Uses ammonia as a nitrogen source. The sequence is that of NH(3)-dependent NAD(+) synthetase from Citrobacter koseri (strain ATCC BAA-895 / CDC 4225-83 / SGSC4696).